We begin with the raw amino-acid sequence, 362 residues long: Peptide chain release factor 1 (362 aa).

Gln240 bears the N5-methylglutamine mark.

This sequence belongs to the prokaryotic/mitochondrial release factor family. In terms of processing, methylated by PrmC. Methylation increases the termination efficiency of RF1.

It localises to the cytoplasm. Its function is as follows. Peptide chain release factor 1 directs the termination of translation in response to the peptide chain termination codons UAG and UAA. The protein is Peptide chain release factor 1 of Bifidobacterium longum (strain NCC 2705).